The sequence spans 369 residues: Glutamate 5-kinase (369 aa).

Lysine 11 provides a ligand contact to ATP. 3 residues coordinate substrate: serine 51, aspartate 138, and asparagine 150. Residues 170-171 and 212-218 contribute to the ATP site; these read TD and TGGMATK. A PUA domain is found at 277 to 355; the sequence is KGSIVIDEGA…QDIYAVLGYE (79 aa).

Belongs to the glutamate 5-kinase family.

It localises to the cytoplasm. The enzyme catalyses L-glutamate + ATP = L-glutamyl 5-phosphate + ADP. The protein operates within amino-acid biosynthesis; L-proline biosynthesis; L-glutamate 5-semialdehyde from L-glutamate: step 1/2. Functionally, catalyzes the transfer of a phosphate group to glutamate to form L-glutamate 5-phosphate. This chain is Glutamate 5-kinase, found in Aliivibrio fischeri (strain ATCC 700601 / ES114) (Vibrio fischeri).